The sequence spans 558 residues: Glucose-6-phosphate isomerase (558 aa).

E362 serves as the catalytic Proton donor. Residues H393 and K523 contribute to the active site.

The protein belongs to the GPI family.

Its subcellular location is the cytoplasm. The catalysed reaction is alpha-D-glucose 6-phosphate = beta-D-fructose 6-phosphate. It participates in carbohydrate degradation; glycolysis; D-glyceraldehyde 3-phosphate and glycerone phosphate from D-glucose: step 2/4. This chain is Glucose-6-phosphate isomerase (Pgi), found in Drosophila simulans (Fruit fly).